Reading from the N-terminus, the 154-residue chain is Transcription antitermination protein NusB (154 aa).

This sequence belongs to the NusB family.

In terms of biological role, involved in transcription antitermination. Required for transcription of ribosomal RNA (rRNA) genes. Binds specifically to the boxA antiterminator sequence of the ribosomal RNA (rrn) operons. The protein is Transcription antitermination protein NusB of Rickettsia typhi (strain ATCC VR-144 / Wilmington).